A 545-amino-acid chain; its full sequence is T-complex protein 1 subunit gamma (545 aa).

At Met-1 the chain carries N-acetylmethionine. The disordered stretch occupies residues 1-24 (MMGHRPVLVLSQNTKRESGRKVQS). Ser-11 is subject to Phosphoserine. Lys-15 is covalently cross-linked (Glycyl lysine isopeptide (Lys-Gly) (interchain with G-Cter in SUMO2)). Gly-42 contacts ADP. Gly-42 contacts ATP. Asp-93 lines the Mg(2+) pocket. The ADP site is built by Gly-94, Thr-95, Thr-96, Ser-97, Thr-162, and Lys-163. ATP contacts are provided by Gly-94, Thr-95, and Thr-96. At Ser-170 the chain carries Phosphoserine. Lys-222 carries the N6-acetyllysine modification. A phosphoserine mark is found at Ser-243 and Ser-244. Tyr-247 carries the phosphotyrosine modification. Glycyl lysine isopeptide (Lys-Gly) (interchain with G-Cter in SUMO2) cross-links involve residues Lys-248 and Lys-249. The residue at position 252 (Ser-252) is a Phosphoserine. Cys-366 and Cys-372 form a disulfide bridge. Lys-381 is covalently cross-linked (Glycyl lysine isopeptide (Lys-Gly) (interchain with G-Cter in SUMO2)). Position 411 (Gly-411) interacts with ADP. Residue Gly-411 participates in ATP binding. 2 positions are modified to phosphothreonine: Thr-430 and Thr-459. Positions 482, 483, 497, and 502 each coordinate ADP. Gly-482 contacts ATP. Residue Glu-497 participates in ATP binding. The tract at residues 526-545 (HKKKGDDQNRQTGAPDAGQE) is disordered.

The protein belongs to the TCP-1 chaperonin family. Component of the chaperonin-containing T-complex (TRiC), a hexadecamer composed of two identical back-to-back stacked rings enclosing a protein folding chamber. Each ring is made up of eight different subunits: TCP1/CCT1, CCT2, CCT3, CCT4, CCT5, CCT6A/CCT6, CCT7, CCT8. Interacts with PACRG. Interacts with DNAAF4. Interacts with DLEC1.

The protein resides in the cytoplasm. The catalysed reaction is ATP + H2O = ADP + phosphate + H(+). Its function is as follows. Component of the chaperonin-containing T-complex (TRiC), a molecular chaperone complex that assists the folding of actin, tubulin and other proteins upon ATP hydrolysis. The TRiC complex mediates the folding of WRAP53/TCAB1, thereby regulating telomere maintenance. As part of the TRiC complex may play a role in the assembly of BBSome, a complex involved in ciliogenesis regulating transports vesicles to the cilia. This Rattus norvegicus (Rat) protein is T-complex protein 1 subunit gamma (Cct3).